The following is a 461-amino-acid chain: ADP-specific phosphofructokinase (461 aa).

An ADPK domain is found at methionine 1–glutamate 457. 3 residues coordinate Mg(2+): glutamate 268, glutamate 298, and aspartate 441. Catalysis depends on aspartate 441, which acts as the Proton acceptor.

Belongs to the carbohydrate kinase PfkC family. Mg(2+) serves as cofactor.

Its subcellular location is the cytoplasm. The enzyme catalyses beta-D-fructose 6-phosphate + ADP = beta-D-fructose 1,6-bisphosphate + AMP + H(+). It participates in carbohydrate degradation; glycolysis. Functionally, catalyzes the phosphorylation of fructose 6-phosphate to fructose 1,6-bisphosphate using ADP as the phosphate donor. The chain is ADP-specific phosphofructokinase from Thermococcus kodakarensis (strain ATCC BAA-918 / JCM 12380 / KOD1) (Pyrococcus kodakaraensis (strain KOD1)).